Consider the following 111-residue polypeptide: Exocrine gland-secreted peptide 22 (111 aa).

An N-terminal signal peptide occupies residues M1–G24.

The protein belongs to the exocrine gland-secreted peptide family. As to expression, expressed in acinar cells of the lacrimal gland from where it is secreted into tears. Not detected in a range of other tissues tested including other exocrine glands, internal organs and sensory epithelia.

Its subcellular location is the secreted. In terms of biological role, pheromone produced by juveniles which activates a small number of vomeronasal organ sensory neurons and exhibits a powerful inhibitory effect on adult male mating behavior. This is Exocrine gland-secreted peptide 22 from Mus musculus (Mouse).